A 492-amino-acid chain; its full sequence is Zinc finger protein GLIS2 (492 aa).

The disordered stretch occupies residues 49–101 (VITPICSSPPPGFRYRDGDSPPFSSPPIVDLSLSPPSGTDSPSRSSLSPDRAA). The tract at residues 69–129 (PPFSSPPIVD…SPFQFFLPLG (61 aa)) is transcription activation. The span at 82–97 (SPPSGTDSPSRSSLSP) shows a compositional bias: low complexity. The segment at 138 to 161 (MFMSPPKENRLSLEFTEQKQLVCQ) is transcription repression. The C2H2-type 1 zinc finger occupies 158 to 183 (LVCQWAKCNRLFELLQELVDHVNDFH). The C2H2-type 2; degenerate zinc-finger motif lies at 192 to 219 (YCCHWEGCARRGRGFNARYKMLIHIRTH). 3 consecutive C2H2-type zinc fingers follow at residues 225–247 (HCCP…NRSH), 253–277 (YMCP…TRTH), and 283–307 (YYCK…IKAH). A compositionally biased stretch (basic and acidic residues) spans 423–444 (VENEKRPKGQRGDSSERTDGSK). Positions 423–450 (VENEKRPKGQRGDSSERTDGSKLRPGSI) are disordered.

Belongs to the GLI C2H2-type zinc-finger protein family.

The protein localises to the nucleus speckle. Its subcellular location is the cytoplasm. Functionally, can act either as a transcription repressor or as a transcription activator, depending on the cell context. May be involved in neuron differentiation. This is Zinc finger protein GLIS2 (glis2) from Xenopus laevis (African clawed frog).